The sequence spans 28 residues: 14-3-3-like protein 4 (28 aa).

Belongs to the 14-3-3 family.

The polypeptide is 14-3-3-like protein 4 (Pseudotsuga menziesii (Douglas-fir)).